We begin with the raw amino-acid sequence, 1024 residues long: Multidrug resistance protein MdtC (1024 aa).

A run of 12 helical transmembrane segments spans residues 12-32 (VATT…FSLL), 333-353 (EVER…FIFL), 360-380 (LIPA…MYLC), 387-407 (LSLM…IVVL), 435-455 (VLSM…MAGL), 469-489 (VAIG…CAWL), 528-548 (WVMV…ISIP), 853-873 (LWLI…LYES), 875-895 (VHPL…LLAL), 897-917 (LFDA…IGIV), 953-973 (PIIM…LSSG), and 984-1004 (ITIV…TPVI).

Belongs to the resistance-nodulation-cell division (RND) (TC 2.A.6) family. MdtC subfamily. In terms of assembly, part of a tripartite efflux system composed of MdtA, MdtB and MdtC. MdtC forms a heteromultimer with MdtB.

The protein resides in the cell inner membrane. In Yersinia pseudotuberculosis serotype O:1b (strain IP 31758), this protein is Multidrug resistance protein MdtC.